The primary structure comprises 429 residues: Adenylosuccinate synthetase (429 aa).

GTP-binding positions include 11 to 17 (GDEGKGK) and 39 to 41 (GHT). Aspartate 12 acts as the Proton acceptor in catalysis. Positions 12 and 39 each coordinate Mg(2+). IMP is bound by residues 12-15 (DEGK), 37-40 (NAGH), threonine 130, arginine 144, asparagine 226, threonine 241, and arginine 305. Histidine 40 acts as the Proton donor in catalysis. 301-307 (VTTGRRR) serves as a coordination point for substrate. GTP contacts are provided by residues arginine 307, 333 to 335 (KLD), and 415 to 417 (GVG).

Belongs to the adenylosuccinate synthetase family. As to quaternary structure, homodimer. Mg(2+) serves as cofactor.

It is found in the cytoplasm. The enzyme catalyses IMP + L-aspartate + GTP = N(6)-(1,2-dicarboxyethyl)-AMP + GDP + phosphate + 2 H(+). Its pathway is purine metabolism; AMP biosynthesis via de novo pathway; AMP from IMP: step 1/2. Its function is as follows. Plays an important role in the de novo pathway and in the salvage pathway of purine nucleotide biosynthesis. Catalyzes the first committed step in the biosynthesis of AMP from IMP. In Yarrowia lipolytica (strain CLIB 122 / E 150) (Yeast), this protein is Adenylosuccinate synthetase.